A 310-amino-acid chain; its full sequence is Olfactory receptor 5W2 (310 aa).

Residues 1–25 (MDWENCSSLTDFFLLGITNNPEMKV) are Extracellular-facing. The N-linked (GlcNAc...) asparagine glycan is linked to asparagine 5. The helical transmembrane segment at 26-46 (TLFAVFLAVYIINFSANLGMI) threads the bilayer. Residues 47–54 (VLIRMDYQ) are Cytoplasmic-facing. The chain crosses the membrane as a helical span at residues 55–75 (LHTPMYFFLSHLSFCDLCYST). Topologically, residues 76–99 (ATGPKMLVDLLAKNKSIPFYGCAL) are extracellular. Residues 100-120 (QFLVFCIFADSECLLLSVMAF) form a helical membrane-spanning segment. Topologically, residues 121–139 (DRYKAIINPLLYTVNMSSR) are cytoplasmic. A helical transmembrane segment spans residues 140-160 (VCYLLLTGVYLVGIADALIHM). The Extracellular portion of the chain corresponds to 161–196 (TLAFRLCFCGSNEINHFFCDIPPLLLLSRSDTQVNE). The helical transmembrane segment at 197-217 (LVLFTVFGFIELSTISGVFIS) threads the bilayer. The Cytoplasmic segment spans residues 218-237 (YCYIILSVLEIHSAEGRFKA). Residues 238–258 (LSTCTSHLSAVAIFQGTLLFM) traverse the membrane as a helical segment. Residues 259-271 (YFRPSSSYSLDQD) are Extracellular-facing. Residues 272-292 (KMTSLFYTLVVPMLNPLIYSL) form a helical membrane-spanning segment. At 293–310 (RNKDVKEALKKLKNKILF) the chain is on the cytoplasmic side.

Belongs to the G-protein coupled receptor 1 family.

The protein localises to the cell membrane. Odorant receptor. The sequence is that of Olfactory receptor 5W2 (OR5W2) from Homo sapiens (Human).